Reading from the N-terminus, the 764-residue chain is Phenylalanine--tRNA ligase beta subunit (764 aa).

The tRNA-binding domain occupies 38-148 (CIAPKNVVVG…GELVLGKELH (111 aa)). In terms of domain architecture, B5 spans 375 to 455 (LKDCALTFQL…RFVGIDNLVS (81 aa)). Mg(2+)-binding residues include Asp-433, Asp-439, Glu-442, and Glu-443. The 91-residue stretch at 673 to 763 (SIYPSSVRDL…LEKEFNARLK (91 aa)) folds into the FDX-ACB domain.

Belongs to the phenylalanyl-tRNA synthetase beta subunit family. Type 1 subfamily. Tetramer of two alpha and two beta subunits. It depends on Mg(2+) as a cofactor.

It is found in the cytoplasm. The catalysed reaction is tRNA(Phe) + L-phenylalanine + ATP = L-phenylalanyl-tRNA(Phe) + AMP + diphosphate + H(+). The sequence is that of Phenylalanine--tRNA ligase beta subunit (pheT) from Helicobacter pylori (strain J99 / ATCC 700824) (Campylobacter pylori J99).